Here is a 101-residue protein sequence, read N- to C-terminus: UPF0213 protein VC0395_0675/VC395_A0575 (101 aa).

The 77-residue stretch at 9 to 85 folds into the GIY-YIG domain; it reads SPWFVYLVRC…KALSKSQKEA (77 aa).

Belongs to the UPF0213 family.

The protein is UPF0213 protein VC0395_0675/VC395_A0575 of Vibrio cholerae serotype O1 (strain ATCC 39541 / Classical Ogawa 395 / O395).